Consider the following 155-residue polypeptide: SsrA-binding protein (155 aa).

It belongs to the SmpB family.

It is found in the cytoplasm. In terms of biological role, required for rescue of stalled ribosomes mediated by trans-translation. Binds to transfer-messenger RNA (tmRNA), required for stable association of tmRNA with ribosomes. tmRNA and SmpB together mimic tRNA shape, replacing the anticodon stem-loop with SmpB. tmRNA is encoded by the ssrA gene; the 2 termini fold to resemble tRNA(Ala) and it encodes a 'tag peptide', a short internal open reading frame. During trans-translation Ala-aminoacylated tmRNA acts like a tRNA, entering the A-site of stalled ribosomes, displacing the stalled mRNA. The ribosome then switches to translate the ORF on the tmRNA; the nascent peptide is terminated with the 'tag peptide' encoded by the tmRNA and targeted for degradation. The ribosome is freed to recommence translation, which seems to be the essential function of trans-translation. The sequence is that of SsrA-binding protein from Streptococcus equi subsp. equi (strain 4047).